Reading from the N-terminus, the 332-residue chain is L-lactate dehydrogenase A chain (332 aa).

Residues 29–57 (GMVG…MEDK) and R99 each bind NAD(+). Substrate-binding residues include R106, N138, and R169. N138 contacts NAD(+). H193 serves as the catalytic Proton acceptor. Position 248 (T248) interacts with substrate.

Belongs to the LDH/MDH superfamily. LDH family. In terms of assembly, homotetramer.

The protein localises to the cytoplasm. It catalyses the reaction (S)-lactate + NAD(+) = pyruvate + NADH + H(+). It functions in the pathway fermentation; pyruvate fermentation to lactate; (S)-lactate from pyruvate: step 1/1. Interconverts simultaneously and stereospecifically pyruvate and lactate with concomitant interconversion of NADH and NAD(+). The sequence is that of L-lactate dehydrogenase A chain (ldha) from Fundulus heteroclitus (Killifish).